We begin with the raw amino-acid sequence, 1127 residues long: Disease resistance protein RPS6 (1127 aa).

Position 1 is an N-acetylmethionine (Met-1). The region spanning Trp-12–Met-176 is the TIR domain. The active site involves Glu-87. The NB-ARC domain occupies Glu-191–Lys-452. 11 LRR repeats span residues Met-197 to Lys-221, Ile-540 to Lys-563, Pro-587 to Pro-609, Glu-610 to Leu-632, Ala-633 to Thr-656, Leu-658 to Leu-679, Asn-680 to Ser-704, Ser-766 to Leu-790, Tyr-791 to Leu-813, Asp-814 to Ser-834, and Thr-835 to Leu-857.

As to quaternary structure, interacts with EDS1. Ubiquitous.

It carries out the reaction NAD(+) + H2O = ADP-D-ribose + nicotinamide + H(+). Disease resistance (R) protein that specifically recognizes the hopA1 type III effector avirulence protein from Pseudomonas syringae. Resistance proteins guard the plant against pathogens that contain an appropriate avirulence protein via an indirect interaction with this avirulence protein. That triggers a defense system including the hypersensitive response, which restricts the pathogen growth. This is Disease resistance protein RPS6 (RPS6) from Arabidopsis thaliana (Mouse-ear cress).